The chain runs to 337 residues: Cytoskeleton protein RodZ (337 aa).

Residues 1–111 (MNTEATHDQN…LGKRRKKRDG (111 aa)) are Cytoplasmic-facing. The 53-residue stretch at 19-71 (LRNAREQLGLSQQAVAERLCLKVSTVRDIEEDKAPADLASTFLRGYIRSYARL) folds into the HTH cro/C1-type domain. The segment at residues 30 to 49 (QQAVAERLCLKVSTVRDIEE) is a DNA-binding region (H-T-H motif). A helical; Signal-anchor for type II membrane protein transmembrane segment spans residues 112–132 (WLMTFTWLVLFVVIGLSGAWW). The Periplasmic portion of the chain corresponds to 133–337 (WQDHKAQQEE…TLNAEQSPAQ (205 aa)). Residues 145 to 167 (TMADQSSAELSSNSEQGQSVPLN) show a composition bias toward polar residues. Residues 145 to 235 (TMADQSSAEL…PTAATTPDGA (91 aa)) are disordered. Residues 168 to 207 (TSTTTDPATTSTPPASVDTTATNTQTPAVTAPAPAVDPQQ) show a composition bias toward low complexity. Residues 208–218 (NAVVSPSQANV) are compositionally biased toward polar residues. The span at 219–235 (DTAATPAPTAATTPDGA) shows a compositional bias: low complexity.

This sequence belongs to the RodZ family.

The protein localises to the cell inner membrane. Cytoskeletal protein that is involved in cell-shape control through regulation of the length of the long axis. The protein is Cytoskeleton protein RodZ of Shigella boydii serotype 4 (strain Sb227).